Here is a 121-residue protein sequence, read N- to C-terminus: Large ribosomal subunit protein bL12 (121 aa).

Belongs to the bacterial ribosomal protein bL12 family. As to quaternary structure, homodimer. Part of the ribosomal stalk of the 50S ribosomal subunit. Forms a multimeric L10(L12)X complex, where L10 forms an elongated spine to which 2 to 4 L12 dimers bind in a sequential fashion. Binds GTP-bound translation factors.

Forms part of the ribosomal stalk which helps the ribosome interact with GTP-bound translation factors. Is thus essential for accurate translation. This Clostridium perfringens (strain 13 / Type A) protein is Large ribosomal subunit protein bL12.